Here is a 276-residue protein sequence, read N- to C-terminus: Large ribosomal subunit protein uL2 (276 aa).

Disordered regions lie at residues Ala35–Gly55 and Gly222–Lys276. The span at Lys258–Lys276 shows a compositional bias: basic residues.

Belongs to the universal ribosomal protein uL2 family. Part of the 50S ribosomal subunit. Forms a bridge to the 30S subunit in the 70S ribosome.

Its function is as follows. One of the primary rRNA binding proteins. Required for association of the 30S and 50S subunits to form the 70S ribosome, for tRNA binding and peptide bond formation. It has been suggested to have peptidyltransferase activity; this is somewhat controversial. Makes several contacts with the 16S rRNA in the 70S ribosome. This Shouchella clausii (strain KSM-K16) (Alkalihalobacillus clausii) protein is Large ribosomal subunit protein uL2.